The sequence spans 398 residues: cAMP-dependent protein kinase type 3 (398 aa).

2 positions are modified to phosphoserine: serine 15 and serine 55. The Protein kinase domain maps to 88–342; the sequence is FQILRTLGTG…SEDVKNHPWF (255 aa). Residues 94-102 and lysine 117 each bind ATP; that span reads LGTGSFGRV. Aspartate 211 serves as the catalytic Proton acceptor. An AGC-kinase C-terminal domain is found at 343-398; it reads NEVIWEKLLARYIETPYEPPIQQGQGDTSQFDRYPEEEFNYGIQGEDPYMDLMKEF.

This sequence belongs to the protein kinase superfamily. AGC Ser/Thr protein kinase family. cAMP subfamily.

The enzyme catalyses L-seryl-[protein] + ATP = O-phospho-L-seryl-[protein] + ADP + H(+). It carries out the reaction L-threonyl-[protein] + ATP = O-phospho-L-threonyl-[protein] + ADP + H(+). With respect to regulation, activated by cAMP. In Saccharomyces cerevisiae (strain ATCC 204508 / S288c) (Baker's yeast), this protein is cAMP-dependent protein kinase type 3 (TPK3).